The primary structure comprises 196 residues: MAMLSTSVVPEAFSTPGWQIEKKYSTKVLLGNWVEERGKFTKAIDHTPQCIYRKEYVPMPDHRPDFVSRWYSKSKMEGLPYKHLITHHQEPSHRYLISTYDDHYNRHNYNPGLPALRTWNGQKLLWLPEKSDFPLVAPPTNYGLLEQLQQKWLASKTSLKESIYTTSYPRLPVCAMSRREHAIPVPHPRLQPIPRF.

2 mn regions span residues 47–62 (TPQCIYRKEYVPMPDH) and 97–109 (ISTYDDHYNRHNY).

In terms of assembly, microtubule inner protein component of sperm flagellar doublet microtubules.

Its subcellular location is the cytoplasm. The protein resides in the cytoskeleton. The protein localises to the cilium axoneme. It localises to the flagellum axoneme. Functionally, microtubule inner protein (MIP) part of the dynein-decorated doublet microtubules (DMTs) in cilia axoneme, which is required for motile cilia beating. The protein is Cilia- and flagella-associated protein 107 of Mus musculus (Mouse).